The following is a 348-amino-acid chain: Calcium/calmodulin-dependent protein kinase type 1 (348 aa).

The short motif at 7–22 (RDGSGPAPNATIREKY) is the Nuclear localization signal 1 element. In terms of domain architecture, Protein kinase spans 22 to 278 (YDFRDVLGTG…CQDALSHPWI (257 aa)). Residues 28 to 36 (LGTGAFSKV) and K52 each bind ATP. A Nuclear localization signal 2 motif is present at residues 71 to 78 (KVLRKLRH). Residue D144 is the Proton acceptor of the active site. Position 179 is a phosphothreonine; by ckk-1 (T179). Positions 278 to 318 (ISGNTAYTHDIHGTVAVHLKKSLAKRNWKKAYNAAAAIRQL) are autoinhibitory domain. The short motif at 288 to 294 (IHGTVAV) is the Nuclear export sequence element. Positions 297-307 (KKSLAKRNWKK) match the Nuclear localization signal 3 motif. The segment at 298–319 (KSLAKRNWKKAYNAAAAIRQLQ) is calmodulin-binding. Residues 327-338 (SNRLQKQASQQQ) show a composition bias toward polar residues. Positions 327-348 (SNRLQKQASQQQPEPPTPAFHA) are disordered. The span at 339–348 (PEPPTPAFHA) shows a compositional bias: pro residues.

It belongs to the protein kinase superfamily. CAMK Ser/Thr protein kinase family. CaMK subfamily. In terms of assembly, interacts with importin ima-3; affinity for ima-3 is increased in the presence of Ca(2+) and calmodulin and leads to increased nuclear accumulation of cmk-1 in FLP neurons upon prolonged heat activation. It depends on Mg(2+) as a cofactor. Phosphorylation at Thr-179 can promote both nuclear export and import, sustaining nucleocytoplasmic shuttling. As to expression, expressed in head and tail neurons and vulval muscles. Throughout the nervous system. Detected in neurites and neuronal cell bodies. Expressed in the mechanosensory neurons, AVM and ALM, and in the interneurons, AVA, AVB and AVD. Expressed in the right and left ASE neurons where it functions cell-autonomously to control salt-avoidance learning. Expressed in FLP and AFD thermosensory neurons.

It is found in the nucleus. The protein localises to the cytoplasm. It carries out the reaction L-seryl-[protein] + ATP = O-phospho-L-seryl-[protein] + ADP + H(+). The catalysed reaction is L-threonyl-[protein] + ATP = O-phospho-L-threonyl-[protein] + ADP + H(+). With respect to regulation, activated by Ca(2+)/calmodulin. Binding of calmodulin results in a conformational change that generates functional binding sites for both substrate and ATP, and thus relieves autoinhibition and lowers the Km of substrate binding. Must be phosphorylated by ckk-1 to be maximally active but this does not appear to be required for activity in AFD neurons. Its function is as follows. Calcium/calmodulin-dependent protein kinase that operates in the calcium-triggered CaMKK-CaMK1 signaling cascade which results in transcriptional activation. Transcriptional activation occurs at least in part through phosphorylation of crh-1. Regulates gene expression, sensory morphology, and function of the AFD thermosensory neurons. Involved in long-term adaptation of AFD neurons to temperatures warmer than the initial acclimatized cultivation temperature. Acts in the FLP thermal nociceptors to moderate the responsiveness to noxious heat and controls neuropeptide release from FLP neurons in response to temperature elevations. Regulates the dauer decision, the decision of the larvae to enter into the alternative stress-resistant and long-lived dauer developmental stage, based on the feeding state, primarily in the AWC sensory neurons. Acts non cell-autonomously in the AWC neurons to regulate expression of the daf-28 insulin-like peptide and cell-autonomously in the ASI sensory neurons to regulate expression of the growth promoting daf-7 in a food-regulated manner. Plays a role in memory-based thermal response of an individual AFD neuron cell. Influences habituation and sensitivity to repeated mechanosensory stimuli. Involved in chemotaxis response in AWC neurons to attractant 2-heptanone, a volatile organic compound emitted by the nematode pathogenic bacterium B.nematocida B16. Acts in the ASE salt-sensing neurons to promote a type of aversive gustatory-associated learning called salt-avoidance learning via regulation of crh-1 signaling and the promotion of long-term memory formation, but is not involved in salt attraction. Represses transcription of glutamate receptor glr-1 in the nucleus basally and in response to changes in synaptic activity. The protein is Calcium/calmodulin-dependent protein kinase type 1 of Caenorhabditis elegans.